The following is a 319-amino-acid chain: Acetyl-coenzyme A carboxylase carboxyl transferase subunit alpha (319 aa).

In terms of domain architecture, CoA carboxyltransferase C-terminal spans 36 to 293; sequence EVERLKTKLE…HDAFLSELDR (258 aa).

This sequence belongs to the AccA family. As to quaternary structure, acetyl-CoA carboxylase is a heterohexamer composed of biotin carboxyl carrier protein (AccB), biotin carboxylase (AccC) and two subunits each of ACCase subunit alpha (AccA) and ACCase subunit beta (AccD).

The protein localises to the cytoplasm. The enzyme catalyses N(6)-carboxybiotinyl-L-lysyl-[protein] + acetyl-CoA = N(6)-biotinyl-L-lysyl-[protein] + malonyl-CoA. It functions in the pathway lipid metabolism; malonyl-CoA biosynthesis; malonyl-CoA from acetyl-CoA: step 1/1. Functionally, component of the acetyl coenzyme A carboxylase (ACC) complex. First, biotin carboxylase catalyzes the carboxylation of biotin on its carrier protein (BCCP) and then the CO(2) group is transferred by the carboxyltransferase to acetyl-CoA to form malonyl-CoA. This is Acetyl-coenzyme A carboxylase carboxyl transferase subunit alpha from Dichelobacter nodosus (strain VCS1703A).